Reading from the N-terminus, the 240-residue chain is Tetrahydromethanopterin S-methyltransferase subunit A (240 aa).

Topologically, residues 1–216 (MADKKAPASG…DAALIAKFNS (216 aa)) are cytoplasmic. A 5-hydroxybenzimidazolylcob(I)amide-binding site is contributed by His85. A helical membrane pass occupies residues 217–234 (GYYNGKIQGIAIGLFLSL). Topologically, residues 235–240 (LIFSLL) are extracellular.

It belongs to the MtrA family. As to quaternary structure, the complex is composed of 8 subunits; MtrA, MtrB, MtrC, MtrD, MtrE, MtrF, MtrG and MtrH. 5-hydroxybenzimidazolylcob(I)amide serves as cofactor.

The protein localises to the cell membrane. The catalysed reaction is 5-methyl-5,6,7,8-tetrahydromethanopterin + coenzyme M + 2 Na(+)(in) = 5,6,7,8-tetrahydromethanopterin + methyl-coenzyme M + 2 Na(+)(out). The protein operates within one-carbon metabolism; methanogenesis from CO(2); methyl-coenzyme M from 5,10-methylene-5,6,7,8-tetrahydromethanopterin: step 2/2. Part of a complex that catalyzes the formation of methyl-coenzyme M and tetrahydromethanopterin from coenzyme M and methyl-tetrahydromethanopterin. This is an energy-conserving, sodium-ion translocating step. The polypeptide is Tetrahydromethanopterin S-methyltransferase subunit A (Methanococcus aeolicus (strain ATCC BAA-1280 / DSM 17508 / OCM 812 / Nankai-3)).